The primary structure comprises 206 residues: Small ribosomal subunit protein uS4 (206 aa).

Residues 27-47 (PSESKCNMNAAPGQHGGRRGR) form a disordered region. The S4 RNA-binding domain occupies 96–158 (QRLDNVVYRM…SRKQIRIQSA (63 aa)).

Belongs to the universal ribosomal protein uS4 family. As to quaternary structure, part of the 30S ribosomal subunit. Contacts protein S5. The interaction surface between S4 and S5 is involved in control of translational fidelity.

In terms of biological role, one of the primary rRNA binding proteins, it binds directly to 16S rRNA where it nucleates assembly of the body of the 30S subunit. Its function is as follows. With S5 and S12 plays an important role in translational accuracy. This chain is Small ribosomal subunit protein uS4, found in Dichelobacter nodosus (strain VCS1703A).